Consider the following 551-residue polypeptide: Palmdelphin (551 aa).

Met1 carries the N-acetylmethionine modification. Positions Gln12 to Ile106 form a coiled coil. Lys125 participates in a covalent cross-link: Glycyl lysine isopeptide (Lys-Gly) (interchain with G-Cter in SUMO2). Residue Ser135 is modified to Phosphoserine. A Glycyl lysine isopeptide (Lys-Gly) (interchain with G-Cter in SUMO1); alternate cross-link involves residue Lys179. Lys179 is covalently cross-linked (Glycyl lysine isopeptide (Lys-Gly) (interchain with G-Cter in SUMO2); alternate). Over residues Glu248–Glu259 the composition is skewed to basic and acidic residues. The interval Glu248–Gly280 is disordered. Polar residues predominate over residues Thr270–Gly280. Thr271 carries the post-translational modification Phosphothreonine. Ser321, Ser370, Ser384, and Ser385 each carry phosphoserine. 2 disordered regions span residues Thr342 to Glu392 and Asp449 to Ser535. Residues Lys484–Asn495 show a composition bias toward basic and acidic residues. Ser498, Ser515, and Ser520 each carry phosphoserine.

The protein belongs to the paralemmin family. As to quaternary structure, interacts with GLUL. Phosphorylated. Ubiquitous. Most abundant in cardiac and skeletal muscle.

It localises to the cytoplasm. The protein resides in the cell projection. The protein localises to the dendrite. Its subcellular location is the dendritic spine. The chain is Palmdelphin (PALMD) from Homo sapiens (Human).